The primary structure comprises 220 residues: ATP synthase subunit 5, mitochondrial (220 aa).

Belongs to the ATPase delta chain family. As to quaternary structure, F-type ATPases have 2 components, CF(1) - the catalytic core - and CF(0) - the membrane proton channel. CF(1) has five subunits: alpha(3), beta(3), gamma(1), delta(1), epsilon(1). CF(0) has three main subunits: a, b and c.

Its subcellular location is the mitochondrion. The protein resides in the mitochondrion inner membrane. In terms of biological role, mitochondrial membrane ATP synthase (F(1)F(0) ATP synthase or Complex V) produces ATP from ADP in the presence of a proton gradient across the membrane which is generated by electron transport complexes of the respiratory chain. F-type ATPases consist of two structural domains, F(1) - containing the extramembraneous catalytic core and F(0) - containing the membrane proton channel, linked together by a central stalk and a peripheral stalk. During catalysis, ATP synthesis in the catalytic domain of F(1) is coupled via a rotary mechanism of the central stalk subunits to proton translocation. Part of the complex F(0) domain and the peripheric stalk, which acts as a stator to hold the catalytic alpha(3)beta(3) subcomplex and subunit a/ATP6 static relative to the rotary elements. The protein is ATP synthase subunit 5, mitochondrial (atp-5) of Neurospora crassa (strain ATCC 24698 / 74-OR23-1A / CBS 708.71 / DSM 1257 / FGSC 987).